We begin with the raw amino-acid sequence, 200 residues long: NADH-quinone oxidoreductase subunit C (200 aa).

This sequence belongs to the complex I 30 kDa subunit family. NDH-1 is composed of 14 different subunits. Subunits NuoB, C, D, E, F, and G constitute the peripheral sector of the complex.

It localises to the cell inner membrane. The catalysed reaction is a quinone + NADH + 5 H(+)(in) = a quinol + NAD(+) + 4 H(+)(out). Its function is as follows. NDH-1 shuttles electrons from NADH, via FMN and iron-sulfur (Fe-S) centers, to quinones in the respiratory chain. The immediate electron acceptor for the enzyme in this species is believed to be ubiquinone. Couples the redox reaction to proton translocation (for every two electrons transferred, four hydrogen ions are translocated across the cytoplasmic membrane), and thus conserves the redox energy in a proton gradient. This Parvibaculum lavamentivorans (strain DS-1 / DSM 13023 / NCIMB 13966) protein is NADH-quinone oxidoreductase subunit C.